A 366-amino-acid polypeptide reads, in one-letter code: tRNA 2-selenouridine synthase (366 aa).

In terms of domain architecture, Rhodanese spans 12 to 136 (FLSGTPMMDV…MRGFLIDVIE (125 aa)). Cys95 (S-selanylcysteine intermediate) is an active-site residue.

The protein belongs to the SelU family. Monomer.

It carries out the reaction 5-methylaminomethyl-2-thiouridine(34) in tRNA + selenophosphate + (2E)-geranyl diphosphate + H2O + H(+) = 5-methylaminomethyl-2-selenouridine(34) in tRNA + (2E)-thiogeraniol + phosphate + diphosphate. It catalyses the reaction 5-methylaminomethyl-2-thiouridine(34) in tRNA + (2E)-geranyl diphosphate = 5-methylaminomethyl-S-(2E)-geranyl-thiouridine(34) in tRNA + diphosphate. The catalysed reaction is 5-methylaminomethyl-S-(2E)-geranyl-thiouridine(34) in tRNA + selenophosphate + H(+) = 5-methylaminomethyl-2-(Se-phospho)selenouridine(34) in tRNA + (2E)-thiogeraniol. The enzyme catalyses 5-methylaminomethyl-2-(Se-phospho)selenouridine(34) in tRNA + H2O = 5-methylaminomethyl-2-selenouridine(34) in tRNA + phosphate. Functionally, involved in the post-transcriptional modification of the uridine at the wobble position (U34) of tRNA(Lys), tRNA(Glu) and tRNA(Gln). Catalyzes the conversion of 2-thiouridine (S2U-RNA) to 2-selenouridine (Se2U-RNA). Acts in a two-step process involving geranylation of 2-thiouridine (S2U) to S-geranyl-2-thiouridine (geS2U) and subsequent selenation of the latter derivative to 2-selenouridine (Se2U) in the tRNA chain. The chain is tRNA 2-selenouridine synthase from Cupriavidus pinatubonensis (strain JMP 134 / LMG 1197) (Cupriavidus necator (strain JMP 134)).